The chain runs to 63 residues: Cytochrome c oxidase subunit 5C-1 (63 aa).

A helical transmembrane segment spans residues 15–34 (SEVKELIIGSVLGLAAGGLW).

The protein belongs to the cytochrome c oxidase subunit 5C family.

It localises to the mitochondrion inner membrane. In terms of biological role, this protein is one of the nuclear-coded polypeptide chains of cytochrome c oxidase, the terminal oxidase in mitochondrial electron transport. The polypeptide is Cytochrome c oxidase subunit 5C-1 (COX5C1) (Helianthus annuus (Common sunflower)).